The sequence spans 1136 residues: Myosin-binding protein C, fast-type (1136 aa).

Disordered regions lie at residues 1 to 55 (MPEA…KKPD) and 151 to 177 (APRQ…DAGE). A compositionally biased stretch (basic and acidic residues) spans 13–35 (KGKDAPKEAPAKQTPEEPPKEAP). Residues 46–149 (PTGIFLKKPD…CDSCSFNVDV (104 aa)) enclose the Ig-like C2-type 1 domain. The segment covering 163-174 (SFKRSGDGKSED) has biased composition (basic and acidic residues). 4 Ig-like C2-type domains span residues 250–339 (SAAF…VKEP), 340–432 (PVLI…VEEK), 433–533 (QLEV…KQEP), and 534–633 (PKIH…VVDV). 2 Fibronectin type-III domains span residues 636-732 (PPEA…IAPT) and 734-829 (APQH…IREI). Residues 833–927 (PKIRLPRHLR…ATIRIRVVEK (95 aa)) enclose the Ig-like C2-type 6 domain. Residues 930–1025 (PAENVMVKEV…SKNTARILKT (96 aa)) form the Fibronectin type-III 3 domain. The 94-residue stretch at 1043–1136 (PKFLTPLMDR…ECKLDVRVPQ (94 aa)) folds into the Ig-like C2-type 7 domain.

It belongs to the immunoglobulin superfamily. MyBP family.

Its function is as follows. Thick filament-associated protein located in the crossbridge region of vertebrate striated muscle a bands. In vitro it binds MHC, F-actin and native thin filaments, and modifies the activity of actin-activated myosin ATPase. It may modulate muscle contraction or may play a more structural role. In Mus musculus (Mouse), this protein is Myosin-binding protein C, fast-type (Mybpc2).